Consider the following 254-residue polypeptide: Ribose-5-phosphate isomerase A (254 aa).

Substrate is bound by residues 45–48 (TGST), 105–108 (DGAD), and 118–121 (KGGG). Catalysis depends on glutamate 127, which acts as the Proton acceptor. Lysine 145 serves as a coordination point for substrate.

It belongs to the ribose 5-phosphate isomerase family. As to quaternary structure, homodimer.

It carries out the reaction aldehydo-D-ribose 5-phosphate = D-ribulose 5-phosphate. It functions in the pathway carbohydrate degradation; pentose phosphate pathway; D-ribose 5-phosphate from D-ribulose 5-phosphate (non-oxidative stage): step 1/1. Functionally, catalyzes the reversible conversion of ribose-5-phosphate to ribulose 5-phosphate. This is Ribose-5-phosphate isomerase A from Treponema pallidum subsp. pallidum (strain SS14).